We begin with the raw amino-acid sequence, 327 residues long: Deoxyribonuclease (327 aa).

Residues 1–24 constitute a signal peptide (or 35); sequence MSKKLRNFLVRIIVAAFASFAVMA. The tract at residues 299-327 is disordered; the sequence is DSTTDEIENSVDDSEEIVYNDTTTEEEEN.

The enzyme catalyses Endonucleolytic cleavage to 5'-phosphodinucleotide and 5'-phosphooligonucleotide end-products.. Functionally, may have a role in S.equisimilis virulence. This is Deoxyribonuclease (sdc) from Streptococcus dysgalactiae subsp. equisimilis (Streptococcus equisimilis).